A 174-amino-acid chain; its full sequence is ATP-dependent protease subunit HslV (174 aa).

Residue T2 is part of the active site. The Na(+) site is built by G157, C160, and T163.

The protein belongs to the peptidase T1B family. HslV subfamily. In terms of assembly, a double ring-shaped homohexamer of HslV is capped on each side by a ring-shaped HslU homohexamer. The assembly of the HslU/HslV complex is dependent on binding of ATP.

It is found in the cytoplasm. The catalysed reaction is ATP-dependent cleavage of peptide bonds with broad specificity.. With respect to regulation, allosterically activated by HslU binding. In terms of biological role, protease subunit of a proteasome-like degradation complex believed to be a general protein degrading machinery. The protein is ATP-dependent protease subunit HslV of Shewanella denitrificans (strain OS217 / ATCC BAA-1090 / DSM 15013).